A 366-amino-acid polypeptide reads, in one-letter code: RNA 3'-terminal phosphate cyclase (366 aa).

The ATP site is built by Gln-104, Pro-131, Tyr-294, Asp-297, Gln-298, and His-320. His-320 acts as the Tele-AMP-histidine intermediate in catalysis.

Belongs to the RNA 3'-terminal cyclase family. Type 1 subfamily.

It localises to the nucleus. Its subcellular location is the nucleoplasm. The catalysed reaction is a 3'-end 3'-phospho-ribonucleotide-RNA + ATP = a 3'-end 2',3'-cyclophospho-ribonucleotide-RNA + AMP + diphosphate. Functionally, catalyzes the conversion of 3'-phosphate to a 2',3'-cyclic phosphodiester at the end of RNA. The mechanism of action of the enzyme occurs in 3 steps: (A) adenylation of the enzyme by ATP; (B) transfer of adenylate to an RNA-N3'P to produce RNA-N3'PP5'A; (C) and attack of the adjacent 2'-hydroxyl on the 3'-phosphorus in the diester linkage to produce the cyclic end product. Likely functions in some aspects of cellular RNA processing. Function plays an important role in regulating axon regeneration by inhibiting central nervous system (CNS) axon regeneration following optic nerve injury. The sequence is that of RNA 3'-terminal phosphate cyclase (RTCA) from Macaca fascicularis (Crab-eating macaque).